We begin with the raw amino-acid sequence, 85 residues long: Large ribosomal subunit protein bL27 (85 aa).

The tract at residues 1–20 (MAHKKAAGSTRNGRDSEAKR) is disordered.

Belongs to the bacterial ribosomal protein bL27 family.

In Colwellia psychrerythraea (strain 34H / ATCC BAA-681) (Vibrio psychroerythus), this protein is Large ribosomal subunit protein bL27.